The chain runs to 333 residues: MNVEPMYLTIFLIAGGIIFLVLFFHYVPFFLWLSAKVSGVNISLVQLFLMRIRNVPPYIIVPGMIEAHKAGLSNITRDELEAHYLAGGHVERVVHALVSASKANIELPFQMATAIDLAGRDVFEAVQMSVNPKVIDTPPVTAVAKDGIQLIAKARVTVRANIRQLVGGAGEDTILARVGEGIVSSIGSSENHKSVLENPDSISKLVLRKGLDAGTAFEILSIDIADIDIGKNIGAALQIDQANADKNIAQAKAEERRAMAVATEQEMKAKAEEARANVIQAEAEVPKAMAEAFRSGNLGIMDYYKMKNIQADTSMRENIAKPIGGATSKPLSD.

The helical transmembrane segment at 10–30 (IFLIAGGIIFLVLFFHYVPFF) threads the bilayer.

This sequence belongs to the flotillin-like FloA family. In terms of assembly, homooligomerizes.

It localises to the cell membrane. The protein localises to the membrane raft. Functionally, found in functional membrane microdomains (FMM) that may be equivalent to eukaryotic membrane rafts. FMMs are highly dynamic and increase in number as cells age. Flotillins are thought to be important factors in membrane fluidity. The polypeptide is Flotillin-like protein FloA (Bacteroides fragilis (strain ATCC 25285 / DSM 2151 / CCUG 4856 / JCM 11019 / LMG 10263 / NCTC 9343 / Onslow / VPI 2553 / EN-2)).